The chain runs to 293 residues: Bifunctional protein FolD (293 aa).

Residues 162 to 164 and Ile-227 each bind NADP(+); that span reads GQS.

It belongs to the tetrahydrofolate dehydrogenase/cyclohydrolase family. Homodimer.

The enzyme catalyses (6R)-5,10-methylene-5,6,7,8-tetrahydrofolate + NADP(+) = (6R)-5,10-methenyltetrahydrofolate + NADPH. It catalyses the reaction (6R)-5,10-methenyltetrahydrofolate + H2O = (6R)-10-formyltetrahydrofolate + H(+). Its pathway is one-carbon metabolism; tetrahydrofolate interconversion. Functionally, catalyzes the oxidation of 5,10-methylenetetrahydrofolate to 5,10-methenyltetrahydrofolate and then the hydrolysis of 5,10-methenyltetrahydrofolate to 10-formyltetrahydrofolate. The polypeptide is Bifunctional protein FolD (Metamycoplasma arthritidis (strain 158L3-1) (Mycoplasma arthritidis)).